The primary structure comprises 2103 residues: uncharacterized protein (2103 aa).

Low complexity predominate over residues 1–12; that stretch reads MSVPGTPGAMEP. A disordered region spans residues 1 to 61; that stretch reads MSVPGTPGAM…DADDQEEEME (61 aa). Acidic residues predominate over residues 51 to 61; the sequence is EDADDQEEEME. Residues 77–196 form the Bromo domain; that stretch reads YELQQGYRIL…MMLEQKLALL (120 aa). Disordered stretches follow at residues 730–750, 853–881, 933–956, 1224–1244, and 1770–1817; these read AKHK…ITKK, NREL…SIDS, QSKQ…AKLS, SASP…TLNG, and GATR…STSP. A compositionally biased stretch (basic and acidic residues) spans 865-877; sequence DLGKDSPKGEISK. A compositionally biased stretch (polar residues) spans 1224–1234; the sequence is SASPTISSTGQ. Residues 1235-1244 show a composition bias toward low complexity; sequence PLSSTTTLNG. Residues 1773-1794 show a composition bias toward polar residues; sequence RSVSISKRQSRTSLQFHSPGIS. A compositionally biased stretch (low complexity) spans 1795–1808; the sequence is TTVPTNVNTNKPQT.

The protein resides in the nucleus. This is an uncharacterized protein from Homo sapiens (Human).